A 423-amino-acid polypeptide reads, in one-letter code: GPI mannosyltransferase 2 (423 aa).

9 helical membrane passes run 7-27 (LTLI…ILSG), 102-122 (VILG…LVLY), 128-148 (IFNP…PTAT), 151-171 (APYT…LLSI), 191-211 (TGIF…AHIF), 228-248 (FLSA…TETV), 298-318 (LAMP…SHLV), 333-353 (PPPI…LLLF), and 400-420 (YWIG…AGHY).

Belongs to the PIGV family.

It is found in the endoplasmic reticulum membrane. Its pathway is glycolipid biosynthesis; glycosylphosphatidylinositol-anchor biosynthesis. Functionally, mannosyltransferase involved in glycosylphosphatidylinositol-anchor biosynthesis. Transfers the second mannose to the glycosylphosphatidylinositol during GPI precursor assembly. The protein is GPI mannosyltransferase 2 (GPI18) of Cryptococcus neoformans var. neoformans serotype D (strain JEC21 / ATCC MYA-565) (Filobasidiella neoformans).